Consider the following 395-residue polypeptide: S-adenosylmethionine synthase (395 aa).

Residue histidine 16 participates in ATP binding. Aspartate 18 lines the Mg(2+) pocket. Residue glutamate 44 coordinates K(+). Positions 57 and 100 each coordinate L-methionine. The tract at residues 100–110 (QSPDIAQGVDR) is flexible loop. Residues 167–169 (DAK), 233–234 (RF), aspartate 242, 248–249 (RK), alanine 265, and lysine 269 contribute to the ATP site. Aspartate 242 lines the L-methionine pocket. Lysine 273 provides a ligand contact to L-methionine.

This sequence belongs to the AdoMet synthase family. As to quaternary structure, homotetramer; dimer of dimers. The cofactor is Mg(2+). It depends on K(+) as a cofactor.

The protein localises to the cytoplasm. The catalysed reaction is L-methionine + ATP + H2O = S-adenosyl-L-methionine + phosphate + diphosphate. The protein operates within amino-acid biosynthesis; S-adenosyl-L-methionine biosynthesis; S-adenosyl-L-methionine from L-methionine: step 1/1. Catalyzes the formation of S-adenosylmethionine (AdoMet) from methionine and ATP. The overall synthetic reaction is composed of two sequential steps, AdoMet formation and the subsequent tripolyphosphate hydrolysis which occurs prior to release of AdoMet from the enzyme. The chain is S-adenosylmethionine synthase from Burkholderia lata (strain ATCC 17760 / DSM 23089 / LMG 22485 / NCIMB 9086 / R18194 / 383).